A 443-amino-acid polypeptide reads, in one-letter code: Packaging protein 1 (443 aa).

A disordered region spans residues 1–75 (MSGAADGTVP…PEAAQPPPSR (75 aa)). The span at 13 to 56 (EDTHQEDSGERECEQRPVHSGREATGESDPALERPDHGERHGPE) shows a compositional bias: basic and acidic residues. An ATP-binding site is contributed by 169–176 (GPTGSGKS). The DNA-binding stretch occupies residues 433-443 (VSYANKRKWYD).

It belongs to the adenoviridae packaging protein 1 family. In terms of assembly, homodimer. Part of a genome packaging complex composed of packaging proteins 1, 2 and 3; this complex specifically binds to the packaging sequence on the left end of viral genomic DNA and performs packaging of the viral genome. Interacts with protein 33K.

The protein resides in the virion. It localises to the host nucleus. It is found in the host nucleoplasm. Its subcellular location is the host nucleolus. Its function is as follows. Component of the packaging machinery which encapsidates the viral DNA into preformed capsids and transcriptional activator of the viral major late promoter (MLP). Binds, along with packaging proteins 2 and 3, to the specific packaging sequence on the left end of viral genomic DNA and displays ATPase activity thereby providing the power stroke of the packaging machinery. The activity of packaging protein IVa2 is stimulated by protein 33K which acts as a terminase. May be the protein that pumps DNA into the capsid powered by ATP hydrolysis. Specifically binds to the 5'-CG-3' nucleotides of the repeats making up the packaging sequence. Component of the DEF-A and DEF-B transcription factors that bind downstream elements of the major late promoter (MLP), and stimulate transcription from the MLP after initiation of viral DNA replication. DEF-A is a heterodimer packaging proteins 1 and 2 and DEF-B is a homodimer of packaging protein 1. In Pantherophis guttatus (Corn snake), this protein is Packaging protein 1.